Consider the following 490-residue polypeptide: Malonyl-[acyl-carrier protein] O-methyltransferase (490 aa).

The tract at residues 1–248 (MKLKRLYPPQ…AASSKLLIAQ (248 aa)) is unknown. Positions 249–490 (RFTKAIGTYP…HPIYIIAKKR (242 aa)) are malonyl-CoA O-methyltransferase.

This sequence belongs to the methyltransferase superfamily.

The enzyme catalyses malonyl-[ACP] + S-adenosyl-L-methionine = malonyl-[ACP] methyl ester + S-adenosyl-L-homocysteine. It participates in cofactor biosynthesis; biotin biosynthesis. Its function is as follows. Converts the free carboxyl group of a malonyl-thioester to its methyl ester by transfer of a methyl group from S-adenosyl-L-methionine (SAM). It allows to synthesize pimeloyl-ACP via the fatty acid synthetic pathway. This chain is Malonyl-[acyl-carrier protein] O-methyltransferase (bioC), found in Bacteroides fragilis (strain 638R).